The primary structure comprises 460 residues: Endoglucanase 2 (460 aa).

Residues 1 to 32 (MIKGSSLKRIKSLVMMAIFSVSIITTAIVSSA) form the signal peptide. Glu99 (proton donor) is an active-site residue. Asp155 serves as the catalytic Nucleophile. Residues 400 to 460 (QQGLKGDVNN…FAQLKVKLLN (61 aa)) enclose the Dockerin domain.

Belongs to the glycosyl hydrolase 8 (cellulase D) family.

It carries out the reaction Endohydrolysis of (1-&gt;4)-beta-D-glucosidic linkages in cellulose, lichenin and cereal beta-D-glucans.. In Ruminiclostridium josui (Clostridium josui), this protein is Endoglucanase 2 (celB).